Consider the following 327-residue polypeptide: GrpE protein homolog 2, mitochondrial (327 aa).

A mitochondrion-targeting transit peptide spans 1 to 39 (MLVLRILSRVTRNAGIRSSLSAVTLPARNQTPVFSSRFH). The interval 68–140 (SSSTSPESDE…DSESDDDELS (73 aa)) is disordered. Basic and acidic residues-rich tracts occupy residues 75-93 (SDEK…EKPT) and 103-113 (SESKDSVTDSA). Residues 130-140 (SDSESDDDELS) show a composition bias toward acidic residues.

It belongs to the GrpE family. Probable component of the PAM complex, at least composed of SSC1 (mtHsp70), MGE1, TIM44, PAM16/TIM16, PAM17 and PAM18/TIM14. Interacts with SSQ1.

The protein localises to the mitochondrion matrix. In terms of biological role, essential component of the PAM complex, a complex required for the translocation of transit peptide-containing proteins from the inner membrane into the mitochondrial matrix in an ATP-dependent manner. Seems to control the nucleotide-dependent binding of mitochondrial HSP70 to substrate proteins. Binds ATP. Interacts with copper ions Cu(2+). Confers thermotolerance to long-term exposure at moderately high temperature (TMHT at 35 degrees Celsius). The chain is GrpE protein homolog 2, mitochondrial from Arabidopsis thaliana (Mouse-ear cress).